The sequence spans 81 residues: Large ribosomal subunit protein bL27m (81 aa).

The span at 1–11 (MATKKSGGSSR) shows a compositional bias: polar residues. A disordered region spans residues 1-20 (MATKKSGGSSRNGRDSKGRR).

It belongs to the bacterial ribosomal protein bL27 family.

The protein resides in the mitochondrion. The protein is Large ribosomal subunit protein bL27m (RPL27) of Reclinomonas americana.